Consider the following 363-residue polypeptide: Fructose-bisphosphate aldolase A (363 aa).

Arginine 43 provides a ligand contact to beta-D-fructose 1,6-bisphosphate. Glutamate 188 serves as the catalytic Proton acceptor. The active-site Schiff-base intermediate with dihydroxyacetone-P is the lysine 230. Beta-D-fructose 1,6-bisphosphate-binding positions include 272-274, serine 301, and arginine 304; that span reads SGG.

It belongs to the class I fructose-bisphosphate aldolase family. Tetramer.

It carries out the reaction beta-D-fructose 1,6-bisphosphate = D-glyceraldehyde 3-phosphate + dihydroxyacetone phosphate. It functions in the pathway carbohydrate degradation; glycolysis; D-glyceraldehyde 3-phosphate and glycerone phosphate from D-glucose: step 4/4. In terms of biological role, plays a key role in glycolysis and gluconeogenesis. The polypeptide is Fructose-bisphosphate aldolase A (Salmo salar (Atlantic salmon)).